The following is a 421-amino-acid chain: Solute carrier family 35 member F3 (421 aa).

The tract at residues 25-45 (EGEERPRDSPGPAEAQAPAGV) is disordered. The next 10 helical transmembrane spans lie at 66 to 86 (IFWG…STQL), 98 to 118 (FTLT…YYVG), 149 to 169 (VFFT…YLYL), 179 to 199 (DVSV…WIVL), 208 to 228 (IVAA…DGFH), 232 to 252 (VIGI…KVLF), 266 to 286 (LFLS…PIIL), 305 to 325 (LCGF…GIAV), 326 to 346 (TYPT…AVID), and 352 to 372 (IVFN…FLLL). The tract at residues 393-421 (KKEEPAEGAADLSSGPQSKNRRARPSFAR) is disordered. A compositionally biased stretch (basic residues) spans 411-421 (KNRRARPSFAR).

The protein belongs to the SLC35F solute transporter family. In terms of tissue distribution, expressed at the highest levels in the adult cerebellum.

The protein localises to the membrane. It carries out the reaction thiamine(in) = thiamine(out). Its function is as follows. Mediates thiamine transport. The chain is Solute carrier family 35 member F3 from Homo sapiens (Human).